A 354-amino-acid polypeptide reads, in one-letter code: Transcription factor ATOH1 (354 aa).

The span at 1–21 (MSRLLHAEEWAEVKELGDHHR) shows a compositional bias: basic and acidic residues. Disordered stretches follow at residues 1–55 (MSRL…ELSL) and 91–122 (EAAAPRDEVDGRGELVRRSSGGASSSKSPGPV). The span at 26-38 (HHLPQPPPPPQPP) shows a compositional bias: pro residues. Residues 94 to 107 (APRDEVDGRGELVR) are compositionally biased toward basic and acidic residues. The span at 108–122 (RSSGGASSSKSPGPV) shows a compositional bias: low complexity. A bHLH domain is found at 159-211 (QRRLAANARERRRMHGLNHAFDQLRNVIPSFNNDKKLSKYETLQMAQIYINAL). 2 disordered regions span residues 216-277 (QTPS…TRFS) and 312-354 (SPSL…DEAS). Residues 250-264 (NATAAGAQQASGGSQ) show a composition bias toward low complexity. The span at 335–354 (HRSDGEFSPHSHYSDSDEAS) shows a compositional bias: basic and acidic residues.

Efficient DNA binding requires dimerization with another bHLH protein.

Its subcellular location is the nucleus. Its function is as follows. Transcriptional regulator. Activates E box-dependent transcription in collaboration with TCF3/E47, but the activity is completely antagonized by the negative regulator of neurogenesis HES1. Plays a role in the differentiation of subsets of neural cells by activating E box-dependent transcription. The protein is Transcription factor ATOH1 of Homo sapiens (Human).